Consider the following 350-residue polypeptide: Phosphotriesterase-related protein (350 aa).

Residues histidine 22, histidine 24, glutamate 169, histidine 201, histidine 230, and aspartate 298 each coordinate a divalent metal cation.

Belongs to the metallo-dependent hydrolases superfamily. Phosphotriesterase family. The cofactor is a divalent metal cation.

This chain is Phosphotriesterase-related protein, found in Drosophila sechellia (Fruit fly).